Reading from the N-terminus, the 319-residue chain is Inactive hydroxysteroid dehydrogenase-like protein 1 (319 aa).

Residues 2 to 82 form a required for mitochondria translocation region; it reads AAVDSFQLLY…CGASEAIAKA (81 aa). NADP(+)-binding positions include 74–80, Lys99, and Asp125; that span reads GASEAIA.

Belongs to the short-chain dehydrogenases/reductases (SDR) family. 17-beta-HSD 3 subfamily.

It localises to the mitochondrion. The sequence is that of Inactive hydroxysteroid dehydrogenase-like protein 1 (hsdl1) from Danio rerio (Zebrafish).